Consider the following 734-residue polypeptide: MEHTYQYAWVIPLLPLPVIMSMGFGLFLVPTATKNLRRIWAFPSVLLLSIAMVFSVHLSIQQINGSSIYQYLWSWTVNNDFSLEFGYLIDPLTSIMLILITTVGILVLIYSDDYMSHDEGYLRFFVYISFFNTSMLGLVTSSNLIQIYFFWELVGMCSYLLIGFWFTRPIAASACQKAFVTNRVGDFGLLLGILGFFWITGSLEFRDLFKIANNWIPNNEINSLLTILCAFLLFLGAVAKSAQFPLHVWLPDAMEGPTPISALIHAATMVAAGIFLIARLLPLFISLPLIMSFISLIGTLTLFLGATLALAQRDIKRSLAYSTMSQLGYMMLALGIGSYQAALFHLITHAYSKALLFLGSGSVIHSMEPLVGYSPDKSQNMVLMGGLRKYIPITRTCFLWGTLSLCGIPPLACFWSKDEILSNSWLYSPFFGIIASFTAGLTAFYMFRIYLLTFDGYLRVHFQNYSSTKEDSLYSISLWGKRISKGVNRDFVLSTAKSGVSFFSQNLSKIHVNTGNRIGSFSTSLGTKNTFVYPHEPGNTMLFPLLILLLCTLFIGSIGIHFDNEIGELTILSKWLTPSINFFQESSNSSINSYEFITNAISSVSLAIFGLFIAYMFYGSAYSFFQNLDLINSFVKGGPKKYFFHQLKKKIYSWSYNRGYIDIFYTRTFTLGIRGLTELTQFFDKGVIDGITNGVGLASFCIGEEIKYVGGGRISSYLFFFLCYVSVFLFFFLS.

Transmembrane regions (helical) follow at residues 9 to 29 (WVIPLLPLPVIMSMGFGLFLV), 39 to 59 (IWAFPSVLLLSIAMVFSVHLS), 89 to 109 (IDPLTSIMLILITTVGILVLI), 125 to 145 (FVYISFFNTSMLGLVTSSNLI), 147 to 167 (IYFFWELVGMCSYLLIGFWFT), 185 to 205 (GDFGLLLGILGFFWITGSLEF), 224 to 244 (LLTILCAFLLFLGAVAKSAQF), 258 to 278 (TPISALIHAATMVAAGIFLIA), 280 to 300 (LLPLFISLPLIMSFISLIGTL), 327 to 347 (LGYMMLALGIGSYQAALFHLI), 354 to 374 (ALLFLGSGSVIHSMEPLVGYS), 396 to 416 (TCFLWGTLSLCGIPPLACFWS), 425 to 445 (WLYSPFFGIIASFTAGLTAFY), 542 to 562 (LFPLLILLLCTLFIGSIGIHF), 605 to 625 (SLAIFGLFIAYMFYGSAYSFF), and 714 to 734 (ISSYLFFFLCYVSVFLFFFLS).

The protein belongs to the complex I subunit 5 family. As to quaternary structure, NDH is composed of at least 16 different subunits, 5 of which are encoded in the nucleus.

It localises to the plastid. The protein resides in the chloroplast thylakoid membrane. The enzyme catalyses a plastoquinone + NADH + (n+1) H(+)(in) = a plastoquinol + NAD(+) + n H(+)(out). The catalysed reaction is a plastoquinone + NADPH + (n+1) H(+)(in) = a plastoquinol + NADP(+) + n H(+)(out). NDH shuttles electrons from NAD(P)H:plastoquinone, via FMN and iron-sulfur (Fe-S) centers, to quinones in the photosynthetic chain and possibly in a chloroplast respiratory chain. The immediate electron acceptor for the enzyme in this species is believed to be plastoquinone. Couples the redox reaction to proton translocation, and thus conserves the redox energy in a proton gradient. In Oryza nivara (Indian wild rice), this protein is NAD(P)H-quinone oxidoreductase subunit 5, chloroplastic (ndhF).